The sequence spans 634 residues: Kelch-like protein 22 (634 aa).

Alanine 2 is subject to N-acetylalanine. The 68-residue stretch at 50-117 (FDVVLVVEGR…IYTSELELSL (68 aa)) folds into the BTB domain. Kelch repeat units follow at residues 299–349 (CVVG…VLNN), 350–399 (FVYL…VVGR), 400–446 (YIYA…TLEG), 448–493 (MYIT…TLLN), 494–544 (KLYV…VLDN), and 545–593 (RIYV…VLTL). A Phosphothreonine modification is found at threonine 463. Tyrosine 466 is subject to Phosphotyrosine. Residue threonine 475 is modified to Phosphothreonine. A disordered region spans residues 600–634 (EPPRGTPDRSQADPDFASEVMSVSDWEEFDNSSED). Residue threonine 605 is modified to Phosphothreonine. Over residues 624–634 (DWEEFDNSSED) the composition is skewed to acidic residues.

As to quaternary structure, component of the BCR(KLHL22) E3 ubiquitin ligase complex, at least composed of CUL3, KLHL22 and RBX1. Interacts with PLK1. Interacts with DEPDC5 (via DEP domain); the interaction depends on amino acid availability. Interacts with YWHAE; required for the nuclear localization of KLHL22 upon amino acid starvation.

Its subcellular location is the cytoplasm. The protein localises to the cytosol. It localises to the cytoskeleton. The protein resides in the microtubule organizing center. It is found in the centrosome. Its subcellular location is the spindle. The protein localises to the nucleus. It localises to the lysosome. It participates in protein modification; protein ubiquitination. Its function is as follows. Substrate-specific adapter of a BCR (BTB-CUL3-RBX1) E3 ubiquitin ligase complex required for chromosome alignment and localization of PLK1 at kinetochores. The BCR(KLHL22) ubiquitin ligase complex mediates monoubiquitination of PLK1, leading to PLK1 dissociation from phosphoreceptor proteins and subsequent removal from kinetochores, allowing silencing of the spindle assembly checkpoint (SAC) and chromosome segregation. Monoubiquitination of PLK1 does not lead to PLK1 degradation. The BCR(KLHL22) ubiquitin ligase complex is also responsible for the amino acid-stimulated 'Lys-48' polyubiquitination and proteasomal degradation of DEPDC5. Through the degradation of DEPDC5, releases the GATOR1 complex-mediated inhibition of the TORC1 pathway. It is therefore an amino acid-dependent activator within the amino acid-sensing branch of the TORC1 pathway, indirectly regulating different cellular processes including cell growth and autophagy. This is Kelch-like protein 22 from Homo sapiens (Human).